A 312-amino-acid chain; its full sequence is Malate dehydrogenase (312 aa).

NAD(+) is bound by residues 7 to 13 (GAAGGIG) and Asp34. Positions 81 and 87 each coordinate substrate. NAD(+) is bound by residues Asn94 and 117–119 (ITN). Positions 119 and 153 each coordinate substrate. His177 serves as the catalytic Proton acceptor. Met227 lines the NAD(+) pocket.

Belongs to the LDH/MDH superfamily. MDH type 1 family. As to quaternary structure, homodimer.

It catalyses the reaction (S)-malate + NAD(+) = oxaloacetate + NADH + H(+). Catalyzes the reversible oxidation of malate to oxaloacetate. This chain is Malate dehydrogenase, found in Cronobacter sakazakii (strain ATCC BAA-894) (Enterobacter sakazakii).